The following is a 725-amino-acid chain: mRNA decay activator protein ZFP36L3 (725 aa).

Over residues 1 to 25 (MANNNLNRPLNTNVADSSNSSSTPG) the composition is skewed to low complexity. The segment at 1–119 (MANNNLNRPL…KVSGSSSLAT (119 aa)) is disordered. 2 stretches are compositionally biased toward polar residues: residues 42–72 (APSS…QSGA) and 100–119 (HSLQ…SLAT). 2 C3H1-type zinc fingers span residues 122–150 (RYKT…HGYR) and 160–188 (KYKT…HNQP). Residues 193 to 711 (VLSESTLEEP…ESEFDNTNSS (519 aa)) form a necessary for cytoplasmic localization region. The segment at 276-310 (STTAHDADKDPDKDADKDPSNNSANDALAFPQEPG) is disordered. A compositionally biased stretch (basic and acidic residues) spans 280–294 (HDADKDPDKDADKDP). The next 4 helical transmembrane spans lie at 380-400 (LAPA…AMAL), 420-440 (AALA…GAAM), 441-461 (APGA…MATG), and 468-488 (AAMA…GAAV). Positions 686–709 (DEDDFLRRSSSSSSLNESEFDNTN) are disordered. Residues 693–702 (RSSSSSSLNE) are compositionally biased toward low complexity.

Expressed in placenta and extraembryonic tissues (at protein level). Not detected in embryos and fetus.

It localises to the cytoplasm. It is found in the membrane. In terms of biological role, placenta-specific zinc-finger RNA-binding protein that destabilizes cytoplasmic AU-rich element (ARE)-containing mRNA transcripts by promoting their poly(A) tail removal or deadenylation, and hence provide a mechanism for attenuating protein synthesis. Binds to the 3'-UTR ARE of placental target mRNAs, such as TNF, HBEGF and LIPG. Involved in placental expression of many genes important for normal placental physiology. The protein is mRNA decay activator protein ZFP36L3 of Mus musculus (Mouse).